A 536-amino-acid polypeptide reads, in one-letter code: CTP synthase (536 aa).

The segment at 1–267 (MSKFVFVTGG…CKETLKYLDL (267 aa)) is amidoligase domain. Residue serine 13 coordinates CTP. Serine 13 is a binding site for UTP. Residues 14–19 (SIGKGI) and aspartate 71 contribute to the ATP site. Aspartate 71 and glutamate 141 together coordinate Mg(2+). Residues 148-150 (DIE), 188-193 (KTKPTQ), and lysine 224 each bind CTP. UTP-binding positions include 188–193 (KTKPTQ) and lysine 224. The region spanning 292-534 (KVALVGKYIE…IKASQDKLTQ (243 aa)) is the Glutamine amidotransferase type-1 domain. Glycine 354 is a binding site for L-glutamine. Residue cysteine 381 is the Nucleophile; for glutamine hydrolysis of the active site. Residues 382-385 (LGMQ), glutamate 405, and arginine 462 each bind L-glutamine. Active-site residues include histidine 507 and glutamate 509.

It belongs to the CTP synthase family. Homotetramer.

It catalyses the reaction UTP + L-glutamine + ATP + H2O = CTP + L-glutamate + ADP + phosphate + 2 H(+). It carries out the reaction L-glutamine + H2O = L-glutamate + NH4(+). The enzyme catalyses UTP + NH4(+) + ATP = CTP + ADP + phosphate + 2 H(+). It functions in the pathway pyrimidine metabolism; CTP biosynthesis via de novo pathway; CTP from UDP: step 2/2. With respect to regulation, allosterically activated by GTP, when glutamine is the substrate; GTP has no effect on the reaction when ammonia is the substrate. The allosteric effector GTP functions by stabilizing the protein conformation that binds the tetrahedral intermediate(s) formed during glutamine hydrolysis. Inhibited by the product CTP, via allosteric rather than competitive inhibition. Its function is as follows. Catalyzes the ATP-dependent amination of UTP to CTP with either L-glutamine or ammonia as the source of nitrogen. Regulates intracellular CTP levels through interactions with the four ribonucleotide triphosphates. The chain is CTP synthase from Prochlorococcus marinus (strain AS9601).